We begin with the raw amino-acid sequence, 281 residues long: 2-dehydro-3-deoxyphosphooctonate aldolase (281 aa).

It belongs to the KdsA family.

The protein resides in the cytoplasm. It catalyses the reaction D-arabinose 5-phosphate + phosphoenolpyruvate + H2O = 3-deoxy-alpha-D-manno-2-octulosonate-8-phosphate + phosphate. Its pathway is carbohydrate biosynthesis; 3-deoxy-D-manno-octulosonate biosynthesis; 3-deoxy-D-manno-octulosonate from D-ribulose 5-phosphate: step 2/3. The protein operates within bacterial outer membrane biogenesis; lipopolysaccharide biosynthesis. The chain is 2-dehydro-3-deoxyphosphooctonate aldolase from Pseudomonas syringae pv. tomato (strain ATCC BAA-871 / DC3000).